The following is a 1161-amino-acid chain: Nuclear pore complex-interacting protein family member B11 (1161 aa).

Residues 63–87 (IIIAFPTSYKVVITLWIVYLWVSLL) traverse the membrane as a helical segment. Disordered regions lie at residues 278 to 580 (ADDN…DDNI) and 892 to 1161 (SADD…RRLS). The span at 311–321 (PLPPSAPPSAP) shows a compositional bias: pro residues. Basic and acidic residues-rich tracts occupy residues 368–378 (DNIKTTAERLR), 410–420 (DNIKTPAEHLR), 452–462 (DNIKTPAERLR), 494–504 (DNIKTPAEHLR), 536–546 (DNIKTTAEHLR), 918–928 (DNIKTPAERLR), 960–970 (DNIKTPAERLR), 1002–1012 (DNIKTPAERLR), and 1044–1054 (DNIKTPAERLR).

This sequence belongs to the NPIP family.

The protein localises to the membrane. The protein is Nuclear pore complex-interacting protein family member B11 (NPIPB11) of Homo sapiens (Human).